A 182-amino-acid polypeptide reads, in one-letter code: ADP-ribosylation factor-like protein 3 (182 aa).

Glycine 2 is lipidated: N-myristoyl glycine. Phosphoserine is present on serine 5. GTP contacts are provided by residues 24 to 31 (GLDNAGKT), threonine 48, 67 to 71 (DIGGQ), glycine 70, 126 to 129 (NKQD), and 159 to 161 (SAL). Mg(2+)-binding residues include threonine 31 and threonine 48.

This sequence belongs to the small GTPase superfamily. Arf family. As to quaternary structure, found in a complex with ARL3, RP2 and UNC119 (or UNC119B); RP2 induces hydrolysis of GTP ARL3 in the complex, leading to the release of UNC119 (or UNC119B). Interacts with RP2; interaction is direct and stimulated with the activated GTP-bound form of ARL3. Interacts with SYS1. Interacts with ARL2BP; the GTP-bound form interacts with ARL2BP. Microtubule-associated protein. Does not interact with TBCC. Interacts with RP2. Interacts with PDE6D; the interaction occurs specifically with the GTP-bound form of ARL3. Interacts with GGA1; the interaction recruits PKD1:PKD2 complex to trans-Golgi network and is required for ciliary targeting of PKD1:PKD2 complex. Interacts with DNAAF9.

Its subcellular location is the golgi apparatus membrane. The protein localises to the cytoplasm. The protein resides in the cytoskeleton. It is found in the spindle. It localises to the nucleus. Its subcellular location is the microtubule organizing center. The protein localises to the centrosome. The protein resides in the cell projection. It is found in the cilium. Functionally, small GTP-binding protein which cycles between an inactive GDP-bound and an active GTP-bound form, and the rate of cycling is regulated by guanine nucleotide exchange factors (GEF) and GTPase-activating proteins (GAP). Required for normal cytokinesis and cilia signaling. Requires assistance from GTPase-activating proteins (GAPs) like RP2 and PDE6D, in order to cycle between inactive GDP-bound and active GTP-bound forms. Required for targeting proteins to the cilium, including myristoylated NPHP3 and prenylated INPP5E. Targets NPHP3 to the ciliary membrane by releasing myristoylated NPHP3 from UNC119B cargo adapter into the cilium. Required for PKD1:PKD2 complex targeting from the trans-Golgi network to the cilium. This is ADP-ribosylation factor-like protein 3 (ARL3) from Sus scrofa (Pig).